Consider the following 430-residue polypeptide: Pyrokinin-1 receptor (430 aa).

Over 1-16 (MSAGNMSHDLGPPRDP) the chain is Extracellular. Asparagine 5 carries an N-linked (GlcNAc...) asparagine glycan. A helical transmembrane segment spans residues 17–37 (LAIVIPVTVVYSLIFITGVVG). Residues 38–53 (NISTCIVIKKNRSMHT) are Cytoplasmic-facing. The chain crosses the membrane as a helical span at residues 54–74 (ATNYYLFSLAISDFLLLLSGV). Residues 75 to 96 (PQEVSYIWSKYPYVFGEYICIG) are Extracellular-facing. Cysteine 94 and cysteine 171 are oxidised to a cystine. Residues 97–117 (RGLLAETSANATVLTITAFTV) traverse the membrane as a helical segment. Over 118 to 140 (ERYIAICHPFLGQAMSKLSRAIR) the chain is Cytoplasmic. A helical membrane pass occupies residues 141–161 (IIVLVWIMAIVTAIPQAAQFG). At 162–185 (IEHYSGVEQCGIVRVIVKHSFQLS) the chain is on the extracellular side. A helical membrane pass occupies residues 186-206 (TFIFFLAPMSIILVLYLLIGV). At 207–281 (HLYRSTLVEG…GRLNHYGTRR (75 aa)) the chain is on the cytoplasmic side. Residues 282–302 (VLRMLVAVVVCFFLCWAPFHA) traverse the membrane as a helical segment. Residues 303–321 (QRLIAIYAPARGAKLRDQH) are Extracellular-facing. The chain crosses the membrane as a helical span at residues 322 to 342 (EFVYTVMTYVSGVLYYLSTCI). At 343-430 (NPLLYNIMSH…QYAMIGVQVN (88 aa)) the chain is on the cytoplasmic side. Over residues 388-397 (TNSSQTQRFS) the composition is skewed to polar residues. The tract at residues 388-413 (TNSSQTQRFSIESAEQPKPSIMQNPT) is disordered.

This sequence belongs to the G-protein coupled receptor 1 family.

It localises to the cell membrane. In terms of biological role, receptor for the neuropeptide CAP-3/pyrokinin-1 (TGPSASSGLWFGPRL-amide). Also activated weakly by other neuropeptides terminating in the sequence PRL-amide including pyrokinin-2, Hug-gamma, and ecdysis-triggering-hormone-1. The activity of this receptor is mediated by G proteins which activate a phosphatidyl-inositol-calcium second messenger system. The chain is Pyrokinin-1 receptor from Drosophila melanogaster (Fruit fly).